The sequence spans 158 residues: Inner membrane assembly complex subunit 17 (158 aa).

The transit peptide at 1-15 directs the protein to the mitochondrion; it reads MFRPLVKRVVTRRFL. The Mitochondrial matrix segment spans residues 16 to 85; it reads AAANNSNAHI…KTQETSLKKF (70 aa). The helical transmembrane segment at 86–108 threads the bilayer; the sequence is VRPAWIFLLMGSIVYLSCHYVWW. At 109–158 the chain is on the mitochondrial intermembrane side; it reads KLDYEEKELEYTHKVHQLESELAALNEAHNSSVSSDKNSKRSSRKWYKFW. Residues 110-140 are a coiled coil; the sequence is LDYEEKELEYTHKVHQLESELAALNEAHNSS.

This sequence belongs to the INA17 family. In terms of assembly, component of the inner membrane assembly (INA) complex, composed of INA17 and INA22. Interacts with a subset of F(1)F(0)-ATP synthase subunits of the F(1)-domain and the peripheral stalk.

The protein localises to the mitochondrion inner membrane. Component of the INA complex (INAC) that promotes the biogenesis of mitochondrial F(1)F(0)-ATP synthase. INAC facilitates the assembly of the peripheral stalk and promotes the assembly of the catalytic F(1)-domain with the membrane-embedded F(0)-domain. This is Inner membrane assembly complex subunit 17 from Kluyveromyces lactis (strain ATCC 8585 / CBS 2359 / DSM 70799 / NBRC 1267 / NRRL Y-1140 / WM37) (Yeast).